Consider the following 313-residue polypeptide: Ribosomal RNA small subunit methyltransferase H (313 aa).

Residues G36 to H38, D56, F80, D102, and Q109 contribute to the S-adenosyl-L-methionine site.

Belongs to the methyltransferase superfamily. RsmH family.

The protein resides in the cytoplasm. The catalysed reaction is cytidine(1402) in 16S rRNA + S-adenosyl-L-methionine = N(4)-methylcytidine(1402) in 16S rRNA + S-adenosyl-L-homocysteine + H(+). In terms of biological role, specifically methylates the N4 position of cytidine in position 1402 (C1402) of 16S rRNA. The chain is Ribosomal RNA small subunit methyltransferase H from Haemophilus ducreyi (strain 35000HP / ATCC 700724).